A 102-amino-acid chain; its full sequence is MAKGQSLQDPFLNALRRERVPVSIYLVNGIKLQGQIESFDQFVILLKNTVSQMVYKHAISTVVPSRPVSHHSSNTSVGASVGNYHSGGVSAPAAQQESDGTE.

In terms of domain architecture, Sm spans Asp-9–Val-68. The interval Ser-65–Glu-102 is disordered. Positions Ala-93 to Glu-102 are enriched in polar residues.

The protein belongs to the Hfq family. In terms of assembly, homohexamer.

Functionally, RNA chaperone that binds small regulatory RNA (sRNAs) and mRNAs to facilitate mRNA translational regulation in response to envelope stress, environmental stress and changes in metabolite concentrations. Also binds with high specificity to tRNAs. The polypeptide is RNA-binding protein Hfq (Photorhabdus laumondii subsp. laumondii (strain DSM 15139 / CIP 105565 / TT01) (Photorhabdus luminescens subsp. laumondii)).